The sequence spans 296 residues: 4-hydroxybenzoate octaprenyltransferase (296 aa).

Transmembrane regions (helical) follow at residues 28-48 (PIGI…AGNG), 52-72 (LANV…GCCI), 102-122 (ALTL…CTNS), 145-167 (TYYP…FTAA), 174-196 (GAWL…YAMV), 219-239 (SIIL…GSRF), 241-261 (LGGW…WEYW), and 275-295 (FLHN…DYAL).

This sequence belongs to the UbiA prenyltransferase family. The cofactor is Mg(2+).

It is found in the cell inner membrane. It carries out the reaction all-trans-octaprenyl diphosphate + 4-hydroxybenzoate = 4-hydroxy-3-(all-trans-octaprenyl)benzoate + diphosphate. It participates in cofactor biosynthesis; ubiquinone biosynthesis. Functionally, catalyzes the prenylation of para-hydroxybenzoate (PHB) with an all-trans polyprenyl group. Mediates the second step in the final reaction sequence of ubiquinone-8 (UQ-8) biosynthesis, which is the condensation of the polyisoprenoid side chain with PHB, generating the first membrane-bound Q intermediate 3-octaprenyl-4-hydroxybenzoate. The chain is 4-hydroxybenzoate octaprenyltransferase from Pseudomonas putida (strain ATCC 700007 / DSM 6899 / JCM 31910 / BCRC 17059 / LMG 24140 / F1).